Reading from the N-terminus, the 785-residue chain is Protein PHTF2 (785 aa).

The 146-residue stretch at 46–191 (IQCLIGAYDQ…VHCQIVSTRT (146 aa)) folds into the PHTF domain. The next 2 membrane-spanning stretches (helical) occupy residues 136 to 156 (VIFF…VLFC) and 164 to 184 (IPLT…TVHC). Disordered regions lie at residues 190 to 239 (RTPK…GTST) and 304 to 401 (RPEE…PESE). A compositionally biased stretch (basic residues) spans 200–209 (GKRRRKLRKA). Over residues 210-219 (AHLEVHREGD) the composition is skewed to basic and acidic residues. Composition is skewed to polar residues over residues 220–239 (GSST…GTST) and 309–333 (AWNT…VSDE). N329 carries N-linked (GlcNAc...) asparagine glycosylation. Residues 359–369 (RNRKSHHYKKH) show a composition bias toward basic residues. Over residues 378 to 390 (SGTSCSSRCSSSR) the composition is skewed to low complexity. Positions 391 to 400 (QDSESARPES) are enriched in basic and acidic residues. The next 4 membrane-spanning stretches (helical) occupy residues 497–517 (IGYQ…PFVF), 553–573 (VIIS…LLCV), 634–654 (VIVS…CAQL), and 668–688 (WELV…VTLG). N-linked (GlcNAc...) asparagine glycosylation is found at N697 and N756. The helical transmembrane segment at 760 to 780 (VVILSAVSGVISDLLGFNLKL) threads the bilayer.

Its subcellular location is the membrane. The protein is Protein PHTF2 (PHTF2) of Homo sapiens (Human).